The primary structure comprises 208 residues: Ras-related protein Rab-6A (208 aa).

S2 is modified (N-acetylserine). S23, V24, G25, K26, T27, S28, D39, N40, Y42, and T45 together coordinate GTP. T27 provides a ligand contact to Mg(2+). The Switch 1 motif lies at 32-50 (RFMYDSFDNTYQATIGIDF). Residues T45 and D68 each contribute to the Mg(2+) site. Residues 69–88 (TAGQERFRSLIPSYIRDSTV) carry the Switch 2 motif. Positions 71, 126, 127, 129, 156, 157, and 158 each coordinate GTP. Position 184 is a phosphoserine (S184). S-geranylgeranyl cysteine attachment occurs at residues C206 and C208. C208 carries the post-translational modification Cysteine methyl ester.

This sequence belongs to the small GTPase superfamily. Rab family. In terms of assembly, interacts with BICDL1; leads to its accumulation in the pericentrosomal region. Interacts with SCYL1BP1. Interacts with VSP52. Interacts with RABGAP1. Interacts with GCC2 (via its GRIP domain). Interacts with RAB6IP1 (via its RUN 1 domain). Interacts with TMF1. Interacts with CIMAP3. Interacts (GTP-bound) with APBA1/MINT1 isoform 3, also called Mint1_826, but not with isoform 1. Interacts with RIC1; the interaction is direct with a preference for RAB6A-GDP. Interacts with RGP1; the interaction is direct with a preference for RAB6A-GDP. Interacts (GTP-bound) with DYNLRB1; the interaction is direct. Interacts with BICD1. Interacts with BICD2; the interaction is direct. Interacts (GTP-bound) with VPS13B. As to quaternary structure, interacts with BICD1. Interacts (GDP-bound) with DYNLRB1; the interaction is direct. Interacts (GTP-bound) with VPS13B. Mg(2+) is required as a cofactor. Prenylated.

The protein resides in the golgi apparatus membrane. The protein localises to the cytoplasmic vesicle. It localises to the secretory vesicle. It is found in the acrosome membrane. It carries out the reaction GTP + H2O = GDP + phosphate + H(+). With respect to regulation, regulated by guanine nucleotide exchange factors (GEFs) which promote the exchange of bound GDP for free GTP. Regulated by GTPase activating proteins (GAPs) which increase the GTP hydrolysis activity. Inhibited by GDP dissociation inhibitors (GDIs). Its function is as follows. The small GTPases Rab are key regulators of intracellular membrane trafficking, from the formation of transport vesicles to their fusion with membranes. Rabs cycle between an inactive GDP-bound form and an active GTP-bound form that is able to recruit to membranes different sets of downstream effectors directly responsible for vesicle formation, movement, tethering and fusion. RAB6A acts as a regulator of COPI-independent retrograde transport from the Golgi apparatus towards the endoplasmic reticulum (ER). Has a low GTPase activity. Recruits VPS13B to the Golgi membrane. Plays a role in neuron projection development. This is Ras-related protein Rab-6A from Mus musculus (Mouse).